Consider the following 305-residue polypeptide: Glyceraldehyde-3-phosphate dehydrogenase 2, cytosolic (305 aa).

Positions 3 and 50 each coordinate NAD(+). D-glyceraldehyde 3-phosphate contacts are provided by residues serine 121–threonine 123, threonine 152, threonine 181–glycine 182, and arginine 204. The Nucleophile role is filled by cysteine 122. Position 286 (asparagine 286) interacts with NAD(+).

Belongs to the glyceraldehyde-3-phosphate dehydrogenase family. As to quaternary structure, homotetramer.

It localises to the cytoplasm. It catalyses the reaction D-glyceraldehyde 3-phosphate + phosphate + NAD(+) = (2R)-3-phospho-glyceroyl phosphate + NADH + H(+). It functions in the pathway carbohydrate degradation; glycolysis; pyruvate from D-glyceraldehyde 3-phosphate: step 1/5. Functionally, key enzyme in glycolysis that catalyzes the first step of the pathway by converting D-glyceraldehyde 3-phosphate (G3P) into 3-phospho-D-glyceroyl phosphate. Essential for the maintenance of cellular ATP levels and carbohydrate metabolism. The chain is Glyceraldehyde-3-phosphate dehydrogenase 2, cytosolic (GAPC) from Hordeum vulgare (Barley).